A 207-amino-acid polypeptide reads, in one-letter code: Alpha-1-acid glycoprotein 8 (207 aa).

The first 18 residues, 1-18, serve as a signal peptide directing secretion; sequence MALHTVLIMLSLLPMLEA. N-linked (GlcNAc...) asparagine glycosylation is found at Asn25, Asn34, Asn76, Asn94, and Asn104. The cysteines at positions 91 and 184 are disulfide-linked.

Belongs to the calycin superfamily. Lipocalin family. As to expression, expressed by the liver and secreted in plasma.

The protein resides in the secreted. Functionally, functions as a transport protein in the blood stream. Binds various ligands in the interior of its beta-barrel domain. Appears to function in modulating the activity of the immune system during the acute-phase reaction. The sequence is that of Alpha-1-acid glycoprotein 8 (Orm8) from Mus caroli (Ryukyu mouse).